A 426-amino-acid chain; its full sequence is L-cysteine:1D-myo-inositol 2-amino-2-deoxy-alpha-D-glucopyranoside ligase (426 aa).

Cys43 is a binding site for Zn(2+). Residues 43–46 (CGIT), Ser58, and 81–83 (NVT) each bind L-cysteinyl-5'-AMP. The 'HIGH' region signature appears at 45–55 (ITPYDATHMGH). A 'ERGGDP' region motif is present at residues 200 to 205 (ERGGDP). Trp241 provides a ligand contact to L-cysteinyl-5'-AMP. Cys245 contacts Zn(2+). An L-cysteinyl-5'-AMP-binding site is contributed by 263–265 (GSD). Residue His270 participates in Zn(2+) binding. Val296 contacts L-cysteinyl-5'-AMP. The short motif at 302-306 (KMSKS) is the 'KMSKS' region element.

The protein belongs to the class-I aminoacyl-tRNA synthetase family. MshC subfamily. In terms of assembly, monomer. Requires Zn(2+) as cofactor.

It catalyses the reaction 1D-myo-inositol 2-amino-2-deoxy-alpha-D-glucopyranoside + L-cysteine + ATP = 1D-myo-inositol 2-(L-cysteinylamino)-2-deoxy-alpha-D-glucopyranoside + AMP + diphosphate + H(+). In terms of biological role, catalyzes the ATP-dependent condensation of GlcN-Ins and L-cysteine to form L-Cys-GlcN-Ins. This Arthrobacter sp. (strain FB24) protein is L-cysteine:1D-myo-inositol 2-amino-2-deoxy-alpha-D-glucopyranoside ligase.